A 143-amino-acid polypeptide reads, in one-letter code: Sirohydrochlorin cobaltochelatase (143 aa).

The active-site Proton acceptor is histidine 9. Residue histidine 9 coordinates Co(2+). Histidine 9 is a binding site for Ni(2+). Substrate is bound by residues glutamate 45 and leucine 70–histidine 75. Histidine 75 provides a ligand contact to Co(2+). Histidine 75 provides a ligand contact to Ni(2+).

The protein belongs to the CbiX family. CbiXS subfamily. Homotetramer; dimer of dimers.

The enzyme catalyses Co-sirohydrochlorin + 2 H(+) = sirohydrochlorin + Co(2+). The catalysed reaction is Ni-sirohydrochlorin + 2 H(+) = sirohydrochlorin + Ni(2+). Its pathway is cofactor biosynthesis; adenosylcobalamin biosynthesis; cob(II)yrinate a,c-diamide from sirohydrochlorin (anaerobic route): step 1/10. Functionally, catalyzes the insertion of Co(2+) into sirohydrochlorin as part of the anaerobic pathway to cobalamin biosynthesis. Involved in the biosynthesis of the unique nickel-containing tetrapyrrole coenzyme F430, the prosthetic group of methyl-coenzyme M reductase (MCR), which plays a key role in methanogenesis and anaerobic methane oxidation. Catalyzes the insertion of Ni(2+) into sirohydrochlorin to yield Ni-sirohydrochlorin. This Methanococcus aeolicus (strain ATCC BAA-1280 / DSM 17508 / OCM 812 / Nankai-3) protein is Sirohydrochlorin cobaltochelatase.